Reading from the N-terminus, the 682-residue chain is Potassium-transporting ATPase ATP-binding subunit (682 aa).

Helical transmembrane passes span 34–54, 58–78, 219–239, and 254–274; these read PVMF…LAMV, IAGS…TVLF, IALT…TATL, and VLVA…LSAI. Aspartate 307 serves as the catalytic 4-aspartylphosphate intermediate. Residues aspartate 344, glutamate 348, 377–384, and lysine 395 contribute to the ATP site; that span reads FTAQSRMS. 2 residues coordinate Mg(2+): aspartate 518 and aspartate 522. The next 3 helical transmembrane spans lie at 588–608, 616–636, and 662–682; these read FAII…LNVM, AILS…PLAL, and LLVP…LGLA.

It belongs to the cation transport ATPase (P-type) (TC 3.A.3) family. Type IA subfamily. The system is composed of three essential subunits: KdpA, KdpB and KdpC.

The protein resides in the cell inner membrane. The enzyme catalyses K(+)(out) + ATP + H2O = K(+)(in) + ADP + phosphate + H(+). Functionally, part of the high-affinity ATP-driven potassium transport (or Kdp) system, which catalyzes the hydrolysis of ATP coupled with the electrogenic transport of potassium into the cytoplasm. This subunit is responsible for energy coupling to the transport system and for the release of the potassium ions to the cytoplasm. The polypeptide is Potassium-transporting ATPase ATP-binding subunit (Salmonella dublin (strain CT_02021853)).